The following is a 720-amino-acid chain: Probable ATP-dependent RNA helicase DHX35 (720 aa).

A Helicase ATP-binding domain is found at Leu64–Ala229. ATP is bound at residue Gly77 to Ser84. The DEAH box signature appears at Asp176–His179. The 178-residue stretch at Thr261–Gly438 folds into the Helicase C-terminal domain.

Belongs to the DEAD box helicase family. DEAH subfamily. As to quaternary structure, identified in the spliceosome C complex.

It catalyses the reaction ATP + H2O = ADP + phosphate + H(+). Functionally, may be involved in pre-mRNA splicing. The sequence is that of Probable ATP-dependent RNA helicase DHX35 (DHX35) from Pongo abelii (Sumatran orangutan).